The primary structure comprises 1182 residues: MSLVYFASGDSKADIEYQTISSTATQVSQEQSERLHDRISKAQLQKLYELFKSAPGQVVGCGDLRRMLEDVDITFNDFAYTRLFLKINQNHDFMVDWNEFVSYLIFGFQEEDPSSQKEALIMPISMAPVVRKTEHRSAVCCITLLKVKSDQTPMEEITESANYSFGGEDSPENSGMWVTASHEGQLRFWSAHMEPLRSAVSESIYCMSYAFYNNGKTHSKLVLGDYAGNVRILSYSPYLRGPFQAKPGAALVELVWADVLRGRIPLLIPREYINLHNELISCVYFSLHMNTLFASAEYRNTKKYRGRCPGLIMVSNEDRNNFRIPLGVSVFYVSEIKNILVTGGPDTFVRIWDVYISSEPSAILTGHNGGIVAVFVQPEENKVYSVDYHKIIKVWDLQEHTLLQTYGDLVRIIHHSETDIKYYYHSHLRELMVAGRKLIQIKCCPRVRVDLTDGNTHAAPVSVVLYNRLFRNIVTCGLDSYIIVWDPWTGRRKIIMKNCHTKMIYGETIDIEITAACFDPLEQFLLTGARDGSLKIWNYNNAVVVRNMSIQPDQEVTAVIWVVDRILAMGWDRQVTEFNDVEGREYGDPKKWAKFHTDDITCADVKLGEGVVTATYSGEIIFWKLETGQPYRRYNVMDPSRFIELKLNAEEEKLTRRSKRMSSLIGVNRRSTSVQAIKPDEIKDYGANIPVSVQAVLFLQRRPMTKEHGSVFISLDTGIIQVYSHHQHGGYIKQFTAVHKTGDCVLTMATDRKNRFLYTGTAFGYIKVWHIVNYCIPKAEQTYVCMPRLRLEFIFLRKELFLTRAKRMVRFQPEPMLVSSYKGHLKAINSIGFINLPKIIFSGSHDYSCRLWTQGGRYLGTLGTVLPWSKLTPFERAGEDNRAYRLPPDIKKVASSTTLKVISGIQHSFTLKRPKAAEEREEEREVEDTTTDVKNMFERPLREPILGKHFQLPGRSAIEQRIELDTTQLYIPVYTHLRVYPSEMLEALPTSPIISQVKAENYLDHYMPVVGKVDLNTSAINIKEPQKLARTKAGANLDQPRASAGWAKPKTNSILGIPRAGSSLGKARASVSQGSPKAGVSSGYGKVSVSQGYPRAGSPRPCTTSLSKPKTSSSPSKPKGSFRLGSPIAATSPANADSSPGKRKSSPGKRSFSPGKAKASPGKARISSVLGKPKAKTDRETH.

WD repeat units follow at residues 155-199 (EEIT…LRSA), 323-362 (RIPL…EPSA), 366-405 (GHNG…LLQT), 456-495 (THAA…RKII), 508-547 (TIDI…VVRN), 595-635 (FHTD…RRYN), 740-779 (KTGD…IPKA), and 823-862 (GHLK…LGTL). Residues 1031 to 1182 (TKAGANLDQP…PKAKTDRETH (152 aa)) form a disordered region. 2 stretches are compositionally biased toward low complexity: residues 1079 to 1092 (GVSS…VSQG) and 1103 to 1121 (TTSL…PKGS).

The chain is WD repeat-containing protein on Y chromosome from Drosophila virilis (Fruit fly).